The chain runs to 37 residues: MVETLLSGIVLGLMPVTLAGLFTTAYLQYRRGDQLNL.

Residues 5 to 25 (LLSGIVLGLMPVTLAGLFTTA) form a helical membrane-spanning segment.

Belongs to the PetG family. The 4 large subunits of the cytochrome b6-f complex are cytochrome b6, subunit IV (17 kDa polypeptide, PetD), cytochrome f and the Rieske protein, while the 4 small subunits are PetG, PetL, PetM and PetN. The complex functions as a dimer.

It localises to the plastid. The protein localises to the chloroplast thylakoid membrane. Component of the cytochrome b6-f complex, which mediates electron transfer between photosystem II (PSII) and photosystem I (PSI), cyclic electron flow around PSI, and state transitions. PetG is required for either the stability or assembly of the cytochrome b6-f complex. This chain is Cytochrome b6-f complex subunit 5, found in Ostreococcus tauri.